Consider the following 705-residue polypeptide: Polyribonucleotide nucleotidyltransferase (705 aa).

Asp-486 and Asp-492 together coordinate Mg(2+). A KH domain is found at 553–612 (PRIYTMKINPEKIKDVIGKGGSVIRALTDETGTTIEIEDDGTIKIAATDGDKAKHAIRRI). The 69-residue stretch at 622 to 690 (GRIYAGKVTR…RQGRIRLSIK (69 aa)) folds into the S1 motif domain.

The protein belongs to the polyribonucleotide nucleotidyltransferase family. In terms of assembly, component of the RNA degradosome, which is a multiprotein complex involved in RNA processing and mRNA degradation. It depends on Mg(2+) as a cofactor.

It is found in the cytoplasm. It carries out the reaction RNA(n+1) + phosphate = RNA(n) + a ribonucleoside 5'-diphosphate. Functionally, involved in mRNA degradation. Catalyzes the phosphorolysis of single-stranded polyribonucleotides processively in the 3'- to 5'-direction. The sequence is that of Polyribonucleotide nucleotidyltransferase from Yersinia pestis bv. Antiqua (strain Nepal516).